A 345-amino-acid polypeptide reads, in one-letter code: S-adenosylmethionine:tRNA ribosyltransferase-isomerase (345 aa).

It belongs to the QueA family. In terms of assembly, monomer.

The protein resides in the cytoplasm. It carries out the reaction 7-aminomethyl-7-carbaguanosine(34) in tRNA + S-adenosyl-L-methionine = epoxyqueuosine(34) in tRNA + adenine + L-methionine + 2 H(+). It participates in tRNA modification; tRNA-queuosine biosynthesis. Functionally, transfers and isomerizes the ribose moiety from AdoMet to the 7-aminomethyl group of 7-deazaguanine (preQ1-tRNA) to give epoxyqueuosine (oQ-tRNA). This Acinetobacter baumannii (strain AB0057) protein is S-adenosylmethionine:tRNA ribosyltransferase-isomerase.